Here is a 286-residue protein sequence, read N- to C-terminus: Ribosomal RNA small subunit methyltransferase A (286 aa).

S-adenosyl-L-methionine contacts are provided by N28, L30, G55, E77, D103, and N123.

The protein belongs to the class I-like SAM-binding methyltransferase superfamily. rRNA adenine N(6)-methyltransferase family. RsmA subfamily.

It localises to the cytoplasm. It catalyses the reaction adenosine(1518)/adenosine(1519) in 16S rRNA + 4 S-adenosyl-L-methionine = N(6)-dimethyladenosine(1518)/N(6)-dimethyladenosine(1519) in 16S rRNA + 4 S-adenosyl-L-homocysteine + 4 H(+). Specifically dimethylates two adjacent adenosines (A1518 and A1519) in the loop of a conserved hairpin near the 3'-end of 16S rRNA in the 30S particle. May play a critical role in biogenesis of 30S subunits. The protein is Ribosomal RNA small subunit methyltransferase A of Bradyrhizobium sp. (strain ORS 278).